The sequence spans 304 residues: Cell surface-binding protein OPG105 (304 aa).

It belongs to the alpha-carbonic anhydrase family. In terms of assembly, homodimer; disulfide-linked. Apparently non-glycosylated.

It is found in the virion membrane. Functionally, binds to chondroitin sulfate on the cell surface to provide virion attachment to target cell. The sequence is that of Cell surface-binding protein OPG105 (OPG105) from Monkeypox virus.